A 125-amino-acid polypeptide reads, in one-letter code: Protein ApaG (125 aa).

The 125-residue stretch at 1–125 (MIEQPRICVQ…FRLAIPALIH (125 aa)) folds into the ApaG domain.

This is Protein ApaG from Yersinia pseudotuberculosis serotype IB (strain PB1/+).